A 296-amino-acid chain; its full sequence is Myeloid differentiation primary response protein MyD88 (296 aa).

In terms of domain architecture, Death spans 32–109 (RLSLFLNVRT…DVLLELGPSI (78 aa)). The intermediate domain stretch occupies residues 110 to 155 (EEDCQKYILKQQQEEAEKPLQVAAVDSSVPRTAELAGITTLDDPLG). The TIR domain occupies 159 to 293 (ERFDAFICYC…WFWTRLAKAL (135 aa)). At S244 the chain carries Phosphoserine.

In terms of assembly, homodimer. Also forms heterodimers with TIRAP. Binds to TLR2, TLR4, IRAK1, IRAK2 and IRAK4 via their respective TIR domains. Interacts with IL18R1. Interacts with BMX, IL1RL1, IKBKE and IRF7. Interacts with LRRFIP1 and LRRFIP2; this interaction positively regulates Toll-like receptor (TLR) signaling in response to agonist. Interacts with FLII. LRRFIP1 and LRRFIP2 compete with FLII for MYD88-binding. Interacts with IRF1. Upon IL1B treatment, forms a complex with PELI1, IRAK1, IRAK4 and TRAF6; this complex recruits MAP3K7/TAK1, TAB1 and TAB2 to mediate NF-kappa-B activation. Direct binding of SMAD6 to PELI1 prevents the complex formation and hence negatively regulates IL1R-TLR signaling and eventually NF-kappa-B-mediated gene expression. May interact with PIK3AP1. Interacts (via TIR domain) with DHX9 (via H2A and OB-fold regions); this interaction is direct. Interacts with OTUD4 deubiquitinase; the interaction is direct. In terms of processing, ubiquitinated; undergoes 'Lys-63'-linked polyubiquitination. OTUD4 specifically hydrolyzes 'Lys-63'-linked polyubiquitinated MYD88. Deubiquitinated by USP3 that cleaves 'Lys-63'-linked ubiquitin chains leading to inhibition of MYD88-induced NF-kappa-B signaling.

It is found in the cytoplasm. The protein resides in the nucleus. In terms of biological role, adapter protein involved in the Toll-like receptor and IL-1 receptor signaling pathway in the innate immune response. Acts via IRAK1, IRAK2, IRF7 and TRAF6, leading to NF-kappa-B activation, cytokine secretion and the inflammatory response. Increases IL-8 transcription. Involved in IL-18-mediated signaling pathway. Activates IRF1 resulting in its rapid migration into the nucleus to mediate an efficient induction of IFN-beta, NOS2/INOS, and IL12A genes. Upon TLR8 activation by GU-rich single-stranded RNA (GU-rich RNA) derived from viruses, induces IL1B release through NLRP3 inflammasome activation. MyD88-mediated signaling in intestinal epithelial cells is crucial for maintenance of gut homeostasis and controls the expression of the antimicrobial lectin REG3G in the small intestine. This Pan troglodytes (Chimpanzee) protein is Myeloid differentiation primary response protein MyD88 (MYD88).